The chain runs to 2575 residues: Non-reducing polyketide synthase pks11 (2575 aa).

The Starter acyltransferase (SAT) domain occupies 89–228 (LANIILSPLV…ASKTVSTLQG (140 aa)). C129 serves as the catalytic Nucleophile; for transacylase activity. H247 functions as the Proton donor/acceptor; for transacylase activity in the catalytic mechanism. The Ketosynthase family 3 (KS3) domain occupies 373 to 790 (EDDIAVVGMS…GSNASAVVTE (418 aa)). Catalysis depends on for beta-ketoacyl synthase activity residues C538, H673, and H713. The Malonyl-CoA:ACP transacylase (MAT) domain maps to 901–1192 (FGGQISTYVG…TNMASRALGS (292 aa)). The tract at residues 1276–1409 (PKGLWSFIDY…GQIIFVSTDN (134 aa)) is N-terminal hotdog fold. A PKS/mFAS DH domain is found at 1276–1586 (PKGLWSFIDY…YHKVAKATMS (311 aa)). The interval 1307 to 1584 (LVSGHIIAQT…VNYHKVAKAT (278 aa)) is product template (PT) domain. The Proton acceptor; for dehydratase activity role is filled by H1311. The segment at 1437–1586 (ADDIIQGRNI…YHKVAKATMS (150 aa)) is C-terminal hotdog fold. D1493 serves as the catalytic Proton donor; for dehydratase activity. Residues 1597-1606 (TTSTSTNVKS) show a composition bias toward polar residues. The disordered stretch occupies residues 1597-1636 (TTSTSTNVKSSPAAAEGSSPVENGASGSGSKAKKTKSGAG). Residues 1637-1711 (QDVVNKTKGL…GLVQIIKSTL (75 aa)) enclose the Carrier domain. S1671 carries the post-translational modification O-(pantetheine 4'-phosphoryl)serine. The disordered stretch occupies residues 1713-1762 (VSDDEEGSDQEGSEASSSESSTTFTPSTTATTVSDVEDNGNEKSIGKEKS). Residues 1714–1724 (SDDEEGSDQEG) show a composition bias toward acidic residues. Low complexity predominate over residues 1725-1746 (SEASSSESSTTFTPSTTATTVS). A compositionally biased stretch (basic and acidic residues) spans 1752–1762 (GNEKSIGKEKS). Positions 1835–2130 (LTRIPHDPQH…HIDWTDGNSP (296 aa)) are methyltransferase domain. The Thioester reductase (TE) domain occupies 2204 to 2448 (ITGATGSLGS…LCWTPVDDVA (245 aa)).

Pantetheine 4'-phosphate is required as a cofactor.

It functions in the pathway secondary metabolite biosynthesis. Non-reducing polyketide synthase; part of the gene cluster that mediates the biosynthesis of mitorubrinol and mitorubrinic acid, two virulence factors that improve T.marneffei intracellular survival in macrophages. The two polyketide synthases pks12 and pks11 are probably responsible for sequential use in the biosynthesis of mitorubrinol and mitorubrinic acid. The first part of the biosynthesis is probably catalyzed by pks12, which synthesized orsellinic acid. This tetraketide is then used as a starter unit for pks11, which possesses a SAT domain, in the second part of the biosynthesis. Pks11, contains a methyltransferase domain, also served that methylates the products, using a methyl group from S-adenosylmethionine. In Talaromyces marneffei (Penicillium marneffei), this protein is Non-reducing polyketide synthase pks11.